We begin with the raw amino-acid sequence, 303 residues long: N-acetyl-D-glucosamine kinase (303 aa).

ATP contacts are provided by residues 4 to 11 (GFDIGGTK) and 133 to 140 (GVGGGLIF). 4 residues coordinate Zn(2+): His157, Cys177, Cys179, and Cys184.

Belongs to the ROK (NagC/XylR) family. NagK subfamily.

The enzyme catalyses N-acetyl-D-glucosamine + ATP = N-acetyl-D-glucosamine 6-phosphate + ADP + H(+). It participates in cell wall biogenesis; peptidoglycan recycling. Its function is as follows. Catalyzes the phosphorylation of N-acetyl-D-glucosamine (GlcNAc) derived from cell-wall degradation, yielding GlcNAc-6-P. In Escherichia coli O127:H6 (strain E2348/69 / EPEC), this protein is N-acetyl-D-glucosamine kinase.